Reading from the N-terminus, the 1072-residue chain is Vacuolar membrane protease (1072 aa).

Residues 1–9 (MINPISFRP) are Cytoplasmic-facing. The chain crosses the membrane as a helical span at residues 10-30 (GPVTFWTTLIYLALLIPIVII). Residues 31–404 (NEKTPAAPKT…SFVLFGLRGM (374 aa)) are Vacuolar-facing. Residues Asn-48, Asn-116, Asn-119, and Asn-128 are each glycosylated (N-linked (GlcNAc...) asparagine). Zn(2+)-binding residues include His-185 and Asp-197. The Proton acceptor role is filled by Glu-231. 3 residues coordinate Zn(2+): Glu-232, Glu-257, and His-330. The chain crosses the membrane as a helical span at residues 405–425 (FAWSLTLLIATPLVLVGITWL). Topologically, residues 426 to 457 (LRNLDKDYFFTSTVKTKEHPEYEAVPIGGWKG) are cytoplasmic. Residues 458 to 478 (FFRFPFALGVAVFFTISSALL) form a helical membrane-spanning segment. The Vacuolar portion of the chain corresponds to 479–492 (MNKVNPLIVYSSRY). A helical membrane pass occupies residues 493–513 (SVWVMMVSIFYFSFWMIMRGA). Topologically, residues 514 to 523 (NFVRPSALHR) are cytoplasmic. Residues 524–544 (GYANLWLFVFGWIVLVAVTAL) form a helical membrane-spanning segment. Residues 545–554 (EDRRRIAAGY) are Vacuolar-facing. A helical transmembrane segment spans residues 555 to 575 (IFVFLESAIFLSCLISFVELL). Topologically, residues 576-747 (AVPRKSSYAL…YDHEQEWSGH (172 aa)) are cytoplasmic. The segment at 593-713 (GQEHDHNGYQ…GTNDRGRTTF (121 aa)) is disordered. Positions 606-617 (DSTDEPSLRARA) are enriched in basic and acidic residues. The segment covering 643 to 661 (GTTNGLSTAPSVAAHSSQP) has biased composition (polar residues). The chain crosses the membrane as a helical span at residues 748–768 (LPSWAWFFQFLLLGPFMIILA). Residues 769–789 (AQTGLMLTDAVYQTGSDGSKL) are Vacuolar-facing. Residues 790 to 810 (ITPYLIIFVFTVLLILPLTPF) traverse the membrane as a helical segment. Topologically, residues 811–817 (IHRVTHH) are cytoplasmic. The helical transmembrane segment at 818-838 (IPVFLLVVFIVTLTYNLIAFP) threads the bilayer. The Vacuolar portion of the chain corresponds to 839-1072 (FSANNRYKTF…VEGRKAFKIV (234 aa)). Residues Asn-932 and Asn-974 are each glycosylated (N-linked (GlcNAc...) asparagine).

The protein belongs to the peptidase M28 family. It depends on Zn(2+) as a cofactor.

The protein localises to the vacuole membrane. Functionally, may be involved in vacuolar sorting and osmoregulation. The protein is Vacuolar membrane protease of Neurospora crassa (strain ATCC 24698 / 74-OR23-1A / CBS 708.71 / DSM 1257 / FGSC 987).